The sequence spans 354 residues: Membrane progestin receptor beta (354 aa).

Topologically, residues Met1 to Glu75 are cytoplasmic. A helical transmembrane segment spans residues Val76–Phe96. The Extracellular portion of the chain corresponds to Val97–Pro111. Residues Leu112–Leu132 form a helical membrane-spanning segment. The Cytoplasmic portion of the chain corresponds to Gln133 to Arg174. The chain crosses the membrane as a helical span at residues Phe175–Cys195. Residues Tyr196–Gln213 lie on the Extracellular side of the membrane. The helical transmembrane segment at Val214–Leu234 threads the bilayer. The Cytoplasmic portion of the chain corresponds to Cys235–Gln243. The helical transmembrane segment at Ala244–Cys264 threads the bilayer. The Extracellular segment spans residues Pro265 to Gln283. The helical transmembrane segment at Ile284 to Tyr304 threads the bilayer. The Cytoplasmic segment spans residues Lys305–Ser319. Residues Ile320–Leu340 form a helical membrane-spanning segment. Residues Leu341–Ser354 lie on the Extracellular side of the membrane.

It belongs to the ADIPOR family.

The protein localises to the cell membrane. Steroid membrane receptor. Binds progesterone. May be involved in oocyte maturation. This chain is Membrane progestin receptor beta (PAQR8), found in Sus scrofa (Pig).